The chain runs to 607 residues: SNW/SKI-interacting protein A (607 aa).

Disordered stretches follow at residues 29–77 (ERYG…GGAF), 178–205 (AQPK…AAFN), 217–265 (EMAQ…IPPC), 327–434 (LQLK…DRDR), and 516–607 (KVMK…ERGR). Residues 35–49 (SAQSDAAAAAAKPSG) show a composition bias toward low complexity. The SNW stretch occupies residues 190-353 (SKFIKYKPSQ…QKARMERTGA (164 aa)). The span at 240-251 (PPVPVMHSPPRP) shows a compositional bias: pro residues. Coiled coils occupy residues 313–349 (AREA…ARME) and 391–418 (EREA…LEAR). Composition is skewed to basic and acidic residues over residues 327 to 339 (LQLK…EQEL), 379 to 434 (EQPR…DRDR), 516 to 527 (KVMKTDRFKPDK), 535 to 550 (RSGK…KQEE), and 562 to 571 (EVKKGKKAVE).

The protein belongs to the SNW family. In terms of assembly, interacts with FLO6/SIP4. Interacts with DIS1. Widely expressed.

The protein localises to the nucleus. Its function is as follows. Acts as a positive regulator of drought and salt tolerance. Acts as a positive regulator of cell viability. In Oryza sativa subsp. japonica (Rice), this protein is SNW/SKI-interacting protein A.